A 529-amino-acid chain; its full sequence is Mannuronan C5-epimerase (529 aa).

The N-terminal stretch at 1–30 (MGACAMNPQALKGSAMLAAAMLLASGAAMA) is a signal peptide. PbH1 repeat units follow at residues 229 to 256 (GTET…SISQ), 291 to 313 (TTGF…DPHD), 315 to 338 (SHGL…IISR), 340 to 362 (VNDS…VLDR), 364 to 386 (SVNN…TLYE), and 387 to 409 (SGDN…RVRN). The active-site Proton acceptor is H312.

This sequence belongs to the D-mannuronate C5-epimerase family.

It is found in the periplasm. The enzyme catalyses [(1-&gt;4)-beta-D-mannuronosyl](n) = [alginate](n). The protein operates within glycan biosynthesis; alginate biosynthesis. Functionally, catalyzes the epimerization of beta-D-mannuronate to alpha-L-guluronate during the synthesis of the linear polysaccharide alginate. In addition, is part of a periplasmic protein complex that protects alginate from degradation by AlgL by channeling the newly formed alginate polymer through a scaffold that transfers the alginate polymer through the periplasmic space to the outer membrane secretin AlgE. The sequence is that of Mannuronan C5-epimerase from Pseudomonas fluorescens.